Here is a 218-residue protein sequence, read N- to C-terminus: Ribose-5-phosphate isomerase A (218 aa).

Substrate-binding positions include 28–31 (TGST), 81–84 (DGAD), and 94–97 (KGGG). Glu103 (proton acceptor) is an active-site residue. A substrate-binding site is contributed by Lys121.

It belongs to the ribose 5-phosphate isomerase family. As to quaternary structure, homodimer.

The catalysed reaction is aldehydo-D-ribose 5-phosphate = D-ribulose 5-phosphate. It participates in carbohydrate degradation; pentose phosphate pathway; D-ribose 5-phosphate from D-ribulose 5-phosphate (non-oxidative stage): step 1/1. Functionally, catalyzes the reversible conversion of ribose-5-phosphate to ribulose 5-phosphate. The protein is Ribose-5-phosphate isomerase A of Shewanella woodyi (strain ATCC 51908 / MS32).